Consider the following 224-residue polypeptide: GrpE protein homolog 2, mitochondrial (224 aa).

Residues 1–31 constitute a mitochondrion transit peptide; the sequence is MAARSLWAVQRLQRLLASGAMSESRGWLHPF. Lys141 bears the N6-acetyllysine mark.

It belongs to the GrpE family. In terms of assembly, probable component of the PAM complex at least composed of a mitochondrial HSP70 protein, GRPEL1 or GRPEL2, TIMM44, TIMM16/PAM16 and TIMM14/DNAJC19. Ubiquitous.

The protein resides in the mitochondrion matrix. Essential component of the PAM complex, a complex required for the translocation of transit peptide-containing proteins from the inner membrane into the mitochondrial matrix in an ATP-dependent manner. Seems to control the nucleotide-dependent binding of mitochondrial HSP70 to substrate proteins. Stimulates ATPase activity of mt-HSP70. May also serve to modulate the interconversion of oligomeric (inactive) and monomeric (active) forms of mt-HSP70. The polypeptide is GrpE protein homolog 2, mitochondrial (Grpel2) (Mus musculus (Mouse)).